The following is a 481-amino-acid chain: Glutamine synthetase (481 aa).

One can recognise a GS beta-grasp domain in the interval 22 to 106 (NEVEFVDFRF…VFCDVYDVYK (85 aa)). The GS catalytic domain maps to 114 to 481 (PRSIAKKALQ…PFEFITTYSC (368 aa)). Positions 139, 141, 223, and 230 each coordinate Mg(2+). Residues 274–275 (NG) and Gly-275 each bind L-glutamate. His-279 provides a ligand contact to Mg(2+). Residues 281–283 (HVS) and Ser-283 each bind ATP. L-glutamate contacts are provided by Arg-331, Glu-337, and Arg-349. Residues Arg-349 and Arg-354 each coordinate ATP. Glu-367 provides a ligand contact to Mg(2+). Arg-369 provides a ligand contact to L-glutamate.

It belongs to the glutamine synthetase family. As to quaternary structure, oligomer of 12 subunits arranged in the form of two hexameric ring. Mg(2+) is required as a cofactor.

The protein localises to the cytoplasm. It catalyses the reaction L-glutamate + NH4(+) + ATP = L-glutamine + ADP + phosphate + H(+). Its activity is regulated as follows. The activity of this enzyme could be controlled by adenylation under conditions of abundant glutamine. In terms of biological role, catalyzes the ATP-dependent biosynthesis of glutamine from glutamate and ammonia. This is Glutamine synthetase from Helicobacter pylori (strain ATCC 700392 / 26695) (Campylobacter pylori).